The primary structure comprises 495 residues: MNRTPSPVDPCDFVIFGGTGDLAARKLLPALYLRDRDGQLAGATRIIGVAKAGLDDAGYRNTVRAGLARHVEPDLLDSDVVDRFLSRLRFVSVDLTEPSDYAAVGDVLTSPDGGSGHDIRVFYLACAPALFGPICGALGAQGLVTESSRVVLEKPIGRDLASAQQINEAVGAVFAEHQIFRIDHYLGKESVQQLLVTRFGNTWLEPLWNSSRIDHVQITAAESLGVGARGDYYDQSGALRDMLQNHLLQVLCLVAMEPPTHVNRESVRDEKRKVLEALEPLTAEQTQRDTVTGQYGPGLVGDEVVGSYREEVADPHSRTETFVAVKAHIRNWRWAGVPFYLRTGKRMSQRFSEIVVQFKPVPLPMFPGIEGTSEPNRLIISLQPDEAIRLEMTAKEPGSGGRLRPVSLALNYTEAFPERSPDAYERLLMDVVRGDPTLFMRRDEVEAAWAWAEPILRHWQDADRVPRTYPAGTDGPVDAATLIERDGRRWHGGAA.

K51 participates in a covalent cross-link: Isoglutamyl lysine isopeptide (Lys-Gln) (interchain with Q-Cter in protein Pup). Residues D94–L95 and K154 contribute to the NADP(+) site. Positions 184, 188, 222, and 241 each coordinate substrate. H246 serves as the catalytic Proton acceptor. K345 is a binding site for substrate.

The protein belongs to the glucose-6-phosphate dehydrogenase family.

The catalysed reaction is D-glucose 6-phosphate + NADP(+) = 6-phospho-D-glucono-1,5-lactone + NADPH + H(+). It participates in carbohydrate degradation; pentose phosphate pathway; D-ribulose 5-phosphate from D-glucose 6-phosphate (oxidative stage): step 1/3. In terms of biological role, catalyzes the oxidation of glucose 6-phosphate to 6-phosphogluconolactone. In Mycolicibacterium smegmatis (strain ATCC 700084 / mc(2)155) (Mycobacterium smegmatis), this protein is Glucose-6-phosphate 1-dehydrogenase.